Here is a 149-residue protein sequence, read N- to C-terminus: UPF0178 protein NT01CX_0440 (149 aa).

The protein belongs to the UPF0178 family.

The polypeptide is UPF0178 protein NT01CX_0440 (Clostridium novyi (strain NT)).